A 383-amino-acid chain; its full sequence is Lipoyl synthase, mitochondrial (383 aa).

Residues 25-34 (STPSLLQTLD) are compositionally biased toward polar residues. Positions 25-44 (STPSLLQTLDPSVPSPPAAG) are disordered. [4Fe-4S] cluster-binding residues include C110, C115, C121, C141, C145, C148, and S357. A Radical SAM core domain is found at 126-346 (ETGTATATIM…RALGVEMGFR (221 aa)).

The protein belongs to the radical SAM superfamily. Lipoyl synthase family. Requires [4Fe-4S] cluster as cofactor.

Its subcellular location is the mitochondrion. It catalyses the reaction [[Fe-S] cluster scaffold protein carrying a second [4Fe-4S](2+) cluster] + N(6)-octanoyl-L-lysyl-[protein] + 2 oxidized [2Fe-2S]-[ferredoxin] + 2 S-adenosyl-L-methionine + 4 H(+) = [[Fe-S] cluster scaffold protein] + N(6)-[(R)-dihydrolipoyl]-L-lysyl-[protein] + 4 Fe(3+) + 2 hydrogen sulfide + 2 5'-deoxyadenosine + 2 L-methionine + 2 reduced [2Fe-2S]-[ferredoxin]. The protein operates within protein modification; protein lipoylation via endogenous pathway; protein N(6)-(lipoyl)lysine from octanoyl-[acyl-carrier-protein]: step 2/2. Catalyzes the radical-mediated insertion of two sulfur atoms into the C-6 and C-8 positions of the octanoyl moiety bound to the lipoyl domains of lipoate-dependent enzymes, thereby converting the octanoylated domains into lipoylated derivatives. The chain is Lipoyl synthase, mitochondrial from Zea mays (Maize).